The primary structure comprises 90 residues: Small ribosomal subunit protein uS15c (90 aa).

It belongs to the universal ribosomal protein uS15 family. Part of the 30S ribosomal subunit.

The protein resides in the plastid. The protein localises to the chloroplast. The chain is Small ribosomal subunit protein uS15c (rps15) from Populus alba (White poplar).